The primary structure comprises 490 residues: Serine hydroxymethyltransferase, mitochondrial (490 aa).

Residues 1–20 (MFPRASALAKCMATVHRRGL) constitute a mitochondrion transit peptide. Position 265 is an N6-(pyridoxal phosphate)lysine (Lys265).

The protein belongs to the SHMT family. Homotetramer. Interacts with NAP1. Pyridoxal 5'-phosphate is required as a cofactor.

The protein resides in the mitochondrion. The enzyme catalyses (6R)-5,10-methylene-5,6,7,8-tetrahydrofolate + glycine + H2O = (6S)-5,6,7,8-tetrahydrofolate + L-serine. It functions in the pathway one-carbon metabolism; tetrahydrofolate interconversion. Interconversion of serine and glycine. The polypeptide is Serine hydroxymethyltransferase, mitochondrial (SHM1) (Saccharomyces cerevisiae (strain ATCC 204508 / S288c) (Baker's yeast)).